The chain runs to 761 residues: Protein spire homolog 1 (761 aa).

2 disordered regions span residues 1–23 and 160–183; these read MTDGGMLISPSALQDPGDGARPE and DCPDEGYEATEEEDEGEEENAEVS. The 188-residue stretch at 36-223 folds into the KIND domain; the sequence is LCLEEILTLY…RALYAETKEL (188 aa). Acidic residues predominate over residues 160–180; it reads DCPDEGYEATEEEDEGEEENA. Residues 218–246 adopt a coiled-coil conformation; it reads AETKELRTFLEKIKSAKENLRKMEGETEE. WH2 domains follow at residues 295–313 and 359–376; these read PYEMLMDDIRSKRYKLRKV and LHERILEEIRSERKLRPV. Disordered stretches follow at residues 375–406 and 419–539; these read PVSPDMIRRSRLGAGKSISTPQDLFRSSDIPD and ANGT…KSLA. Residues 469 to 480 show a composition bias toward low complexity; it reads SSSSISTSLVED. Over residues 504–520 the composition is skewed to basic and acidic residues; that stretch reads PDKRIAPQRRHSIEKEA. The spir-box stretch occupies residues 557-577; that stretch reads LTLTVEEVMHIRQVLVKAELE. Disordered stretches follow at residues 630 to 694 and 728 to 761; these read PSKP…DELE and STKRARLHRRTHSVYSSSTSSSNYKPTERTIKEV. Over residues 636–647 the composition is skewed to low complexity; it reads SLPISSLGPSIL. The span at 682–693 shows a compositional bias: basic and acidic residues; that stretch reads KHGDRSSSKDEL. Residues 728-739 are compositionally biased toward basic residues; sequence STKRARLHRRTH. Over residues 740-749 the composition is skewed to low complexity; that stretch reads SVYSSSTSSS.

Belongs to the spire family.

The protein localises to the cytoplasm. The protein resides in the cytoskeleton. It is found in the cytosol. It localises to the cleavage furrow. Its subcellular location is the perinuclear region. The protein localises to the cell membrane. The protein resides in the cytoplasmic vesicle membrane. Its function is as follows. Acts as an actin nucleation factor, remains associated with the slow-growing pointed end of the new filament. Involved in intracellular vesicle transport along actin fibers, providing a novel link between actin cytoskeleton dynamics and intracellular transport. Required for asymmetric spindle positioning and asymmetric cell division during meiosis. Required for normal formation of the cleavage furrow and for polar body extrusion during female germ cell meiosis. Also acts in the nucleus: together with FMN2, promotes assembly of nuclear actin filaments in response to DNA damage in order to facilitate movement of chromatin and repair factors after DNA damage. In addition, promotes innate immune signaling downstream of dsRNA sensing. Mechanistically, contributes to IRF3 phosphorylation and activation downstream of MAVS and upstream of TBK1. The protein is Protein spire homolog 1 of Danio rerio (Zebrafish).